Consider the following 35-residue polypeptide: MDAFAYTLLMTLVVATLFFAVAFRDPPKIGKDSGK.

A helical membrane pass occupies residues 3–23; sequence AFAYTLLMTLVVATLFFAVAF.

The protein belongs to the PsbT family. PSII is composed of 1 copy each of membrane proteins PsbA, PsbB, PsbC, PsbD, PsbE, PsbF, PsbH, PsbI, PsbJ, PsbK, PsbL, PsbM, PsbT, PsbX, PsbY, Psb30/Ycf12, peripheral proteins PsbO, CyanoQ (PsbQ), PsbU, PsbV and a large number of cofactors. It forms dimeric complexes.

The protein localises to the cellular thylakoid membrane. Functionally, found at the monomer-monomer interface of the photosystem II (PS II) dimer, plays a role in assembly and dimerization of PSII. PSII is a light-driven water plastoquinone oxidoreductase, using light energy to abstract electrons from H(2)O, generating a proton gradient subsequently used for ATP formation. The polypeptide is Photosystem II reaction center protein T (Prochlorococcus marinus (strain MIT 9303)).